The following is a 259-amino-acid chain: Thrombin-like enzyme gyroxin B1.7 (259 aa).

A signal peptide spans Met1–Ala18. The propeptide occupies Gln19–Pro259. In terms of domain architecture, Peptidase S1 spans Val25–Ala250. Disulfide bonds link Cys31/Cys162, Cys49/Cys65, Cys141/Cys211, Cys173/Cys190, and Cys201/Cys226. The active-site Charge relay system is His64. Asn102 carries N-linked (GlcNAc...) asparagine glycosylation. Asp109 (charge relay system) is an active-site residue. Ser205 acts as the Charge relay system in catalysis.

This sequence belongs to the peptidase S1 family. Snake venom subfamily. In terms of assembly, monomer. Expressed by the venom gland.

It localises to the secreted. Thrombin-like snake venom serine protease. Displays a specificity similar to trypsin. Releases only fibrinopeptide A in the conversion of fibrinogen to fibrin. Shows coagulant, esterase and amidase activities. Reversibly increases the permeability of the blood brain barrier (BBB) in mice. Induces the barrel rotation syndrome in mice, which is manifested by gyroxin-like, rapid rolling motions. This syndrome may be due to its effect on BBB permeability, and certainly also to other actions affecting endogenous substrates present in the endothelium, nervous tissues or blood. The polypeptide is Thrombin-like enzyme gyroxin B1.7 (Crotalus durissus terrificus (South American rattlesnake)).